The primary structure comprises 161 residues: Nucleotide-binding protein Shal_3198 (161 aa).

It belongs to the YajQ family.

In terms of biological role, nucleotide-binding protein. This Shewanella halifaxensis (strain HAW-EB4) protein is Nucleotide-binding protein Shal_3198.